The following is an 852-amino-acid chain: Cytochrome P450 monooxygenase mpaDE (852 aa).

Over 1–6 (MDYLII) the chain is Lumenal. Residues 7-29 (IRITAVAVVLYLTRYVCCLYLHL) traverse the membrane as a helical segment. The Cytoplasmic portion of the chain corresponds to 30–852 (QDVPGPLFAK…DLEDAMEGTK (823 aa)). Cysteine 448 contacts heme.

This sequence belongs to the cytochrome P450 family. Requires heme as cofactor.

The protein localises to the endoplasmic reticulum membrane. The enzyme catalyses 5-methylorsellinate + reduced [NADPH--hemoprotein reductase] + O2 = 4,6-dihydroxy-2-(hydroxymethyl)-3-methylbenzoate + oxidized [NADPH--hemoprotein reductase] + H2O + H(+). The catalysed reaction is 4,6-dihydroxy-2-(hydroxymethyl)-3-methylbenzoate + H(+) = 5,7-dihydroxy-4-methylphthalide + H2O. The protein operates within secondary metabolite biosynthesis; terpenoid biosynthesis. Functionally, cytochrome P450 monooxygenase; part of the gene cluster that mediates the biosynthesis of mycophenolic acid (MPA), the first isolated antibiotic natural product in the world obtained from a culture of Penicillium brevicompactum in 1893. MpaDE is an endoplasmic reticulum-bound enzyme that catalyzes the conversion of 5-methylorsellinic acid (5MOA) into the phthalide compound 5,7-dihydroxy-4,6-dimethylphthalide (DHMP). MpaDE first catalyzes hydroxylation of 5-MOA to 4,6-dihydroxy-2-(hydroxymethyl)-3-methylbenzoic acid (DHMB), and then acts as a lactone synthase that catalyzes the ring closure to convert DHMB into DHMP. The first step of the pathway is the synthesis of 5-methylorsellinic acid (5MOA) by the cytosolic polyketide synthase mpaC. 5MOA is then converted to the phthalide compound 5,7-dihydroxy-4,6-dimethylphthalide (DHMP) by the endoplasmic reticulum-bound cytochrome P450 monooxygenase mpaDE. MpaDE first catalyzes hydroxylation of 5-MOA to 4,6-dihydroxy-2-(hydroxymethyl)-3-methylbenzoic acid (DHMB). MpaDE then acts as a lactone synthase that catalyzes the ring closure to convert DHMB into DHMP. The next step is the prenylation of DHMP by the Golgi apparatus-associated prenyltransferase mpaA to yield farnesyl-DHMP (FDHMP). The ER-bound oxygenase mpaB then mediates the oxidative cleavage the C19-C20 double bond in FDHMP to yield FDHMP-3C via a mycophenolic aldehyde intermediate. The O-methyltransferase mpaG catalyzes the methylation of FDHMP-3C to yield MFDHMP-3C. After the cytosolic methylation of FDHMP-3C, MFDHMP-3C enters into peroxisomes probably via free diffusion due to its low molecular weight. Upon a peroxisomal CoA ligation reaction, catalyzed by a beta-oxidation component enzyme acyl-CoA ligase ACL891, MFDHMP-3C-CoA would then be restricted to peroxisomes for the following beta-oxidation pathway steps. The peroxisomal beta-oxidation machinery than converts MFDHMP-3C-CoA into MPA_CoA, via a beta-oxidation chain-shortening process. Finally mpaH acts as a peroxisomal acyl-CoA hydrolase with high substrate specificity toward MPA-CoA to release the final product MPA. The polypeptide is Cytochrome P450 monooxygenase mpaDE (Penicillium roqueforti (strain FM164)).